Here is a 356-residue protein sequence, read N- to C-terminus: Protein-L-isoaspartate O-methyltransferase domain-containing protein 1 (356 aa).

A lipid anchor (N-myristoyl glycine) is attached at Gly2. Residue Ser64 is part of the active site. AdoMet binding motif regions lie at residues 85 to 94 (LNLGSGTGYL), 160 to 164 (YDRIY), and 181 to 191 (LKVGGILVMPI). Positions 240-250 (VRNLQDLARIY) are BC-box. A disordered region spans residues 299 to 331 (PLDSEEDEKMEEDKEEEEKEPGEALKPEEPPQN). Residues 301 to 318 (DSEEDEKMEEDKEEEEKE) show a composition bias toward acidic residues. Over residues 319–331 (PGEALKPEEPPQN) the composition is skewed to basic and acidic residues. Residues 340–343 (LPLP) are CUL-box.

The protein belongs to the methyltransferase superfamily. L-isoaspartyl/D-aspartyl protein methyltransferase family. Component of the probable ECS(PCMTD1) E3 ubiquitin-protein ligase complex, at least composed of CUL5, ELOB, ELOC, RBX2 and PCMTD1. Interacts (via the BC-box) with ELOB and ELOC; the interaction is direct and stabilizes PCMTD1.

The protein localises to the cytoplasm. It is found in the membrane. In terms of biological role, substrate recognition component of an ECS (Elongin BC-CUL5-SOCS-box protein) E3 ubiquitin ligase complex which mediates the ubiquitination and subsequent proteasomal degradation of target proteins. Specifically binds to the methyltransferase cofactor S-adenosylmethionine (AdoMet) via the N-terminal AdoMet binding motif, but does not display methyltransferase activity. May provide an alternate maintenance pathway for modified proteins by acting as a damage-specific E3 ubiquitin ligase adaptor protein. This is Protein-L-isoaspartate O-methyltransferase domain-containing protein 1 (PCMTD1) from Bos taurus (Bovine).